The sequence spans 448 residues: Phosphoglucosamine mutase (448 aa).

The Phosphoserine intermediate role is filled by serine 101. Residues serine 101, aspartate 242, aspartate 244, and aspartate 246 each coordinate Mg(2+). Serine 101 carries the phosphoserine modification.

This sequence belongs to the phosphohexose mutase family. The cofactor is Mg(2+). Activated by phosphorylation.

The catalysed reaction is alpha-D-glucosamine 1-phosphate = D-glucosamine 6-phosphate. Its function is as follows. Catalyzes the conversion of glucosamine-6-phosphate to glucosamine-1-phosphate. The sequence is that of Phosphoglucosamine mutase from Afipia carboxidovorans (strain ATCC 49405 / DSM 1227 / KCTC 32145 / OM5) (Oligotropha carboxidovorans).